The sequence spans 398 residues: 4-hydroxy-3-methylbut-2-enyl diphosphate reductase (398 aa).

Cys66 provides a ligand contact to [4Fe-4S] cluster. Residue His96 participates in (2E)-4-hydroxy-3-methylbut-2-enyl diphosphate binding. A dimethylallyl diphosphate-binding site is contributed by His96. His96 serves as a coordination point for isopentenyl diphosphate. A [4Fe-4S] cluster-binding site is contributed by Cys157. His185 is a (2E)-4-hydroxy-3-methylbut-2-enyl diphosphate binding site. Dimethylallyl diphosphate is bound at residue His185. His185 lines the isopentenyl diphosphate pocket. Catalysis depends on Glu187, which acts as the Proton donor. Residue Thr250 participates in (2E)-4-hydroxy-3-methylbut-2-enyl diphosphate binding. Cys288 contacts [4Fe-4S] cluster. Residues Ser317, Ser318, Asn319, and Ser379 each coordinate (2E)-4-hydroxy-3-methylbut-2-enyl diphosphate. Residues Ser317, Ser318, Asn319, and Ser379 each contribute to the dimethylallyl diphosphate site. Isopentenyl diphosphate contacts are provided by Ser317, Ser318, Asn319, and Ser379.

It belongs to the IspH family. [4Fe-4S] cluster serves as cofactor.

The catalysed reaction is isopentenyl diphosphate + 2 oxidized [2Fe-2S]-[ferredoxin] + H2O = (2E)-4-hydroxy-3-methylbut-2-enyl diphosphate + 2 reduced [2Fe-2S]-[ferredoxin] + 2 H(+). It catalyses the reaction dimethylallyl diphosphate + 2 oxidized [2Fe-2S]-[ferredoxin] + H2O = (2E)-4-hydroxy-3-methylbut-2-enyl diphosphate + 2 reduced [2Fe-2S]-[ferredoxin] + 2 H(+). It participates in isoprenoid biosynthesis; dimethylallyl diphosphate biosynthesis; dimethylallyl diphosphate from (2E)-4-hydroxy-3-methylbutenyl diphosphate: step 1/1. It functions in the pathway isoprenoid biosynthesis; isopentenyl diphosphate biosynthesis via DXP pathway; isopentenyl diphosphate from 1-deoxy-D-xylulose 5-phosphate: step 6/6. Its function is as follows. Catalyzes the conversion of 1-hydroxy-2-methyl-2-(E)-butenyl 4-diphosphate (HMBPP) into a mixture of isopentenyl diphosphate (IPP) and dimethylallyl diphosphate (DMAPP). Acts in the terminal step of the DOXP/MEP pathway for isoprenoid precursor biosynthesis. The polypeptide is 4-hydroxy-3-methylbut-2-enyl diphosphate reductase (Synechococcus sp. (strain ATCC 27144 / PCC 6301 / SAUG 1402/1) (Anacystis nidulans)).